Consider the following 168-residue polypeptide: Pleiotrophin (168 aa).

An N-terminal signal peptide occupies residues 1–32 (MQTPQYLQQRRKFAAAFLAFIFILAAVDTAEA). 5 disulfides stabilise this stretch: Cys-47-Cys-76, Cys-55-Cys-85, Cys-62-Cys-89, Cys-99-Cys-131, and Cys-109-Cys-141. 2 chondroitin sulfate binding regions span residues 92–99 (KKQFGAEC) and 123–131 (KRALHNADC). A disordered region spans residues 141–168 (CGKLTKSKPQAESKKKKKEGKKQEKMLD). The interval 147 to 168 (SKPQAESKKKKKEGKKQEKMLD) is chondroitin sulfate A binding.

In terms of assembly, interacts with ALK and NEK6. Interacts with PTPRZ1 (via chondroitin sulfate groups); promotes formation of homooligomers; oligomerization impairs tyrosine phosphatase activity. Forms a complex with PTPRZ1 and CTNNB1; this complex inactivates PTPRZ1 protein tyrosine phosphatase activity through PTN interaction and stimulates tyrosine phosphorylation of CTNNB1. Interacts with ITGB3 and ITGA5. Forms a complex with PTPRZ1 and integrin alpha-V/beta-3 (ITGAV:ITGB3) that stimulates endothelial cell migration through ITGB3 'Tyr-773' phosphorylation. Interacts with SDC3 (via heparan sulfate chains); this interaction mediates the neurite outgrowth-promoting signal from PTN to the cytoskeleton of growing neurites; this interaction mediates osteoblast recruitment. Interacts with GPC2 (via heparan sulfate); this interaction promotes neurite outgrowth through binding of PTN with chondroitin sulfate of proteoglycans, thereby releasing PTPRS of chondroitin sulfate proteoglycans (CSPGs) and leading to binding with heparan sulfate of GPC2. In terms of processing, phosphorylated by NEK6.

The protein localises to the secreted. Secreted growth factor that mediates its signal through cell-surface proteoglycan and non-proteoglycan receptors. Binds cell-surface proteoglycan receptor via their chondroitin sulfate (CS) groups. Thereby regulates many processes like cell proliferation, cell survival, cell growth, cell differentiation and cell migration in several tissues namely neuron and bone. Also plays a role in synaptic plasticity and learning-related behavior by inhibiting long-term synaptic potentiation. Binds PTPRZ1, leading to neutralization of the negative charges of the CS chains of PTPRZ1, inducing PTPRZ1 clustering, thereby causing the dimerization and inactivation of its phosphatase activity leading to increased tyrosine phosphorylation of each of the PTPRZ1 substrates like ALK, CTNNB1 or AFAP1L2 in order to activate the PI3K-AKT pathway. Through PTPRZ1 binding controls oligodendrocyte precursor cell differentiation by enhancing the phosphorylation of AFAP1L2 in order to activate the PI3K-AKT pathway. Forms a complex with PTPRZ1 and integrin alpha-V/beta-3 (ITGAV:ITGB3) that stimulates endothelial cell migration through SRC dephosphorylation and activation that consequently leads to ITGB3 'Tyr-773' phosphorylation. In adult hippocampus promotes dendritic arborization, spine development, and functional integration and connectivity of newborn granule neurons through ALK by activating AKT signaling pathway. Binds GPC2 and chondroitin sulfate proteoglycans (CSPGs) at the neuron surface, leading to abrogation of binding between PTPRS and CSPGs and neurite outgrowth promotion. Binds SDC3 and mediates bone formation by recruiting and attaching osteoblasts/osteoblast precursors to the sites for new bone deposition. Binds ALK and promotes cell survival and cell proliferation through MAPK pathway activation. Inhibits proliferation and enhances differentiation of neural stem cells by inhibiting FGF2-induced fibroblast growth factor receptor signaling pathway. Mediates regulatory mechanisms in normal hemostasis and in hematopoietic regeneration and in maintaining the balance of myeloid and lymphoid regeneration. In addition may play a role in the female reproductive system, auditory response and the progesterone-induced decidualization pathway. The sequence is that of Pleiotrophin from Bos taurus (Bovine).